The sequence spans 474 residues: Photosystem II CP43 reaction center protein (474 aa).

Positions 1–14 (MKTLYSLRRFYPVE) are excised as a propeptide. At threonine 15 the chain carries N-acetylthreonine. Position 15 is a phosphothreonine (threonine 15). Transmembrane regions (helical) follow at residues 69 to 93 (LFEV…PHLA), 134 to 155 (LLGP…KDRN), 178 to 201 (KALY…RKIT), 256 to 276 (KPFA…LSYS), and 292 to 313 (WFNN…ASQA). Glutamate 368 is a binding site for [CaMn4O5] cluster. Residues 448-472 (RARAAAAGFEKGIDRDFEPVLSMTP) traverse the membrane as a helical segment.

It belongs to the PsbB/PsbC family. PsbC subfamily. As to quaternary structure, PSII is composed of 1 copy each of membrane proteins PsbA, PsbB, PsbC, PsbD, PsbE, PsbF, PsbH, PsbI, PsbJ, PsbK, PsbL, PsbM, PsbT, PsbX, PsbY, PsbZ, Psb30/Ycf12, at least 3 peripheral proteins of the oxygen-evolving complex and a large number of cofactors. It forms dimeric complexes. Binds multiple chlorophylls and provides some of the ligands for the Ca-4Mn-5O cluster of the oxygen-evolving complex. It may also provide a ligand for a Cl- that is required for oxygen evolution. PSII binds additional chlorophylls, carotenoids and specific lipids. is required as a cofactor.

It localises to the plastid. The protein resides in the chloroplast thylakoid membrane. In terms of biological role, one of the components of the core complex of photosystem II (PSII). It binds chlorophyll and helps catalyze the primary light-induced photochemical processes of PSII. PSII is a light-driven water:plastoquinone oxidoreductase, using light energy to abstract electrons from H(2)O, generating O(2) and a proton gradient subsequently used for ATP formation. This is Photosystem II CP43 reaction center protein from Citrus sinensis (Sweet orange).